We begin with the raw amino-acid sequence, 574 residues long: Frizzled-7 (574 aa).

Residues 1-32 (MRDPGAAAPLSSLGLCALVLALLGALSAGAGA) form the signal peptide. The Extracellular segment spans residues 33-256 (QPYHGEKGIS…EEERRFARLW (224 aa)). The 120-residue stretch at 44-163 (PDHGFCQPIS…HGAGEICVGQ (120 aa)) folds into the FZ domain. 5 disulfides stabilise this stretch: C49-C110, C57-C103, C94-C131, C120-C160, and C124-C148. An N-linked (GlcNAc...) asparagine glycan is attached at N63. The N-linked (GlcNAc...) asparagine glycan is linked to N164. A helical transmembrane segment spans residues 257 to 277 (VGVWSVLCCASTLFTVLTYLV). The Cytoplasmic segment spans residues 278–288 (DMRRFSYPERP). A helical transmembrane segment spans residues 289–309 (IIFLSGCYFMVAVAHVAGFLL). Residues 310 to 336 (EDRAVCVERFSDDGYRTVAQGTKKEGC) lie on the Extracellular side of the membrane. Residues 337-357 (TILFMVLYFFGMASSIWWVIL) traverse the membrane as a helical segment. Residues 358-379 (SLTWFLAAGMKWGHEAIEANSQ) are Cytoplasmic-facing. The chain crosses the membrane as a helical span at residues 380 to 400 (YFHLAAWAVPAVKTITILAMG). Topologically, residues 401-423 (QVDGDLLSGVCYVGLSSVDALRG) are extracellular. Residues 424-444 (FVLAPLFVYLFIGTSFLLAGF) traverse the membrane as a helical segment. Topologically, residues 445–470 (VSLFRIRTIMKHDGTKTEKLEKLMVR) are cytoplasmic. The chain crosses the membrane as a helical span at residues 471 to 491 (IGVFSVLYTVPATIVLACYFY). Residues 492–528 (EQAFREHWERTWLLQTCKSYAVPCPPGHFPPMSPDFT) are Extracellular-facing. Residues 529–549 (VFMIKYLMTMIVGITTGFWIW) form a helical membrane-spanning segment. The Cytoplasmic segment spans residues 550–574 (SGKTLQSWRRFYHRLSHSSKGETAV). Residues 552–557 (KTLQSW) carry the Lys-Thr-X-X-X-Trp motif, mediates interaction with the PDZ domain of Dvl family members motif. The PDZ-binding motif lies at 572–574 (TAV).

The protein belongs to the G-protein coupled receptor Fz/Smo family. As to quaternary structure, interacts with MAGI3. Interacts with DVL1. Interacts with CCDC88C/DAPLE; the interaction displaces DVL1 from FZD7, leading to inhibition of canonical Wnt signaling and triggering of non-canonical Wnt responses. Interacts with MYOC. Binds to SDCBP; this interaction is increased by inositol trisphosphate (IP3). Interacts with glypican GPC3. In terms of assembly, (Microbial infection) Interacts with C.difficile toxin TcdB; frizzled receptors constitute the major host receptors for TcdB in the colonic epithelium. In terms of processing, ubiquitinated by ZNRF3, leading to its degradation by the proteasome. In terms of tissue distribution, high expression in adult skeletal muscle and fetal kidney, followed by fetal lung, adult heart, brain, and placenta. Specifically expressed in squamous cell esophageal carcinomas.

It localises to the cell membrane. The protein localises to the endosome membrane. In terms of biological role, receptor for Wnt proteins. Most frizzled receptors are coupled to the beta-catenin canonical signaling pathway, which leads to the activation of disheveled proteins, inhibition of GSK-3 kinase, nuclear accumulation of beta-catenin and activation of Wnt target genes. A second signaling pathway involving PKC and calcium fluxes has been seen for some family members, but it is not yet clear if it represents a distinct pathway or if it can be integrated in the canonical pathway, as PKC seems to be required for Wnt-mediated inactivation of GSK-3 kinase. Both pathways seem to involve interactions with G-proteins. Activation by WNT8 induces expression of beta-catenin target genes. Following ligand activation, binds to CCDC88C/DAPLE which displaces DVL1 from FZD7 and leads to inhibition of canonical Wnt signaling, activation of G-proteins by CCDC88C and triggering of non-canonical Wnt responses. May be involved in transduction and intercellular transmission of polarity information during tissue morphogenesis and/or in differentiated tissues. Its function is as follows. (Microbial infection) Acts as a receptor for C.difficile toxin TcdB in the colonic epithelium. The sequence is that of Frizzled-7 (FZD7) from Homo sapiens (Human).